Here is a 316-residue protein sequence, read N- to C-terminus: Probable cell division protein WhiA (316 aa).

The H-T-H motif DNA-binding region spans 275–309 (TLKELGEMVSGGKISKSGINHRLRKIDEIAEKLRA).

It belongs to the WhiA family.

In terms of biological role, involved in cell division and chromosome segregation. The sequence is that of Probable cell division protein WhiA from Bacillus cytotoxicus (strain DSM 22905 / CIP 110041 / 391-98 / NVH 391-98).